The chain runs to 513 residues: ATP synthase subunit alpha (513 aa).

169 to 176 (GDRQTGKT) is a binding site for ATP.

It belongs to the ATPase alpha/beta chains family. As to quaternary structure, F-type ATPases have 2 components, CF(1) - the catalytic core - and CF(0) - the membrane proton channel. CF(1) has five subunits: alpha(3), beta(3), gamma(1), delta(1), epsilon(1). CF(0) has three main subunits: a(1), b(2) and c(9-12). The alpha and beta chains form an alternating ring which encloses part of the gamma chain. CF(1) is attached to CF(0) by a central stalk formed by the gamma and epsilon chains, while a peripheral stalk is formed by the delta and b chains.

It is found in the cell inner membrane. It carries out the reaction ATP + H2O + 4 H(+)(in) = ADP + phosphate + 5 H(+)(out). In terms of biological role, produces ATP from ADP in the presence of a proton gradient across the membrane. The alpha chain is a regulatory subunit. This is ATP synthase subunit alpha from Tolumonas auensis (strain DSM 9187 / NBRC 110442 / TA 4).